The following is a 434-amino-acid chain: Glutamyl-tRNA reductase (434 aa).

Substrate contacts are provided by residues 49–52 (TCNR), S109, 114–116 (EPQ), and Q120. The active-site Nucleophile is C50. 189 to 194 (GAGEMC) provides a ligand contact to NADP(+).

It belongs to the glutamyl-tRNA reductase family. In terms of assembly, homodimer.

The enzyme catalyses (S)-4-amino-5-oxopentanoate + tRNA(Glu) + NADP(+) = L-glutamyl-tRNA(Glu) + NADPH + H(+). Its pathway is porphyrin-containing compound metabolism; protoporphyrin-IX biosynthesis; 5-aminolevulinate from L-glutamyl-tRNA(Glu): step 1/2. Functionally, catalyzes the NADPH-dependent reduction of glutamyl-tRNA(Glu) to glutamate 1-semialdehyde (GSA). This is Glutamyl-tRNA reductase from Trichlorobacter lovleyi (strain ATCC BAA-1151 / DSM 17278 / SZ) (Geobacter lovleyi).